The following is a 392-amino-acid chain: MADLKKAAGGRETPQGELRSEVVEDEGPRSPVAEEPGGSGSNSSETKLSPREEEELDPRIQEELEHLNQASEEINQVELQLDEARTTYRRILQESARKLNTQGSHLGSCIEKARPYYEARRLAKEAQQETQKAALRYERAVSMHNAAREMVFVAEQGVMADKNRLDPTWQEMLNHATCKVNEAEEERLRGEREHQRVTRLCQQAEARVQALQKTLRRAIGKSRPYFELKAQFSQILEEHKAKVTELEQQVAQAKTRYSVALRNLEQISEQIHARRRGLPPHPLGPRRSSPVGAEAGPEGIEDGDSGIEGAEGGGLEEGSSLGPGPGPDTDTLSLLSLRTVASDLQKCDSVEHLRGLSDHASLDGQELGAQSRGRRGSDIGVRGGRHQRSVSL.

The disordered stretch occupies residues 1-57 (MADLKKAAGGRETPQGELRSEVVEDEGPRSPVAEEPGGSGSNSSETKLSPREEEELD). At Thr-13 the chain carries Phosphothreonine. Residues 18-28 (LRSEVVEDEGP) are compositionally biased toward basic and acidic residues. Residues Ser-30 and Ser-49 each carry the phosphoserine modification. Coiled-coil stretches lie at residues 59 to 140 (RIQE…YERA) and 169 to 272 (WQEM…EQIH). Positions 275–332 (RRGLPPHPLGPRRSSPVGAEAGPEGIEDGDSGIEGAEGGGLEEGSSLGPGPGPDTDTL) are disordered. The segment covering 317-332 (EGSSLGPGPGPDTDTL) has biased composition (low complexity). A phosphoserine mark is found at Ser-342, Ser-349, Ser-357, Ser-361, and Ser-377. The interval 364 to 392 (GQELGAQSRGRRGSDIGVRGGRHQRSVSL) is disordered. Basic residues predominate over residues 383–392 (GGRHQRSVSL).

The protein belongs to the SH3BP5 family.

Its function is as follows. Functions as a guanine nucleotide exchange factor (GEF) for RAB11A. This chain is SH3 domain-binding protein 5-like (Sh3bp5l), found in Mus musculus (Mouse).